The following is a 427-amino-acid chain: Glutamyl-tRNA(Gln) amidotransferase subunit D (427 aa).

Residues 74–407 (ERVYIIGAGG…EVVRKMFQRN (334 aa)) form the Asparaginase/glutaminase domain. Residues Thr84, Thr160, Asp161, and Lys240 contribute to the active site.

This sequence belongs to the asparaginase 1 family. GatD subfamily. Heterodimer of GatD and GatE.

The catalysed reaction is L-glutamyl-tRNA(Gln) + L-glutamine + ATP + H2O = L-glutaminyl-tRNA(Gln) + L-glutamate + ADP + phosphate + H(+). Functionally, allows the formation of correctly charged Gln-tRNA(Gln) through the transamidation of misacylated Glu-tRNA(Gln) in organisms which lack glutaminyl-tRNA synthetase. The reaction takes place in the presence of glutamine and ATP through an activated gamma-phospho-Glu-tRNA(Gln). The GatDE system is specific for glutamate and does not act on aspartate. This chain is Glutamyl-tRNA(Gln) amidotransferase subunit D, found in Aeropyrum pernix (strain ATCC 700893 / DSM 11879 / JCM 9820 / NBRC 100138 / K1).